A 97-amino-acid polypeptide reads, in one-letter code: Osteocalcin (97 aa).

Positions 1 to 18 (MKTLAILVLCSLAAICLT) are cleaved as a signal peptide. Positions 19-52 (SSASAGAQPAGDSPVQGGLFMEKDQASAVVRQTR) are excised as a propeptide. The region spanning 53–93 (AAKELTLAQTESLREVCETNMACDEMADAQGIVAAYQAFYG) is the Gla domain. E63, E67, E70, and D76 together coordinate Ca(2+). Residues E63, E67, and E70 each carry the 4-carboxyglutamate modification. C69 and C75 are joined by a disulfide. E77 is modified (4-carboxyglutamate).

It belongs to the osteocalcin/matrix Gla protein family. Gamma-carboxyglutamate residues are formed by vitamin K dependent carboxylation by GGCX. These residues are essential for the binding of calcium. As to expression, in the branchial arches, BGP is found outside the chondrocyte-containing zone. It is found in some cells in the basal zone of the branchial filaments, near the branchial arches, and within the extracellular matrix in the medial zone. In the vertebra, BGP is found in the mineralized bone matrix.

It is found in the secreted. Functionally, the carboxylated form is one of the main organic components of the bone matrix, which constitutes 1-2% of the total bone protein. The carboxylated form binds strongly to apatite and calcium. This is Osteocalcin (bglap) from Argyrosomus regius (Meagre).